The sequence spans 463 residues: Probable cysteine protease RD21B (463 aa).

A signal peptide spans 1–21 (MGFLKLSPMILLLAMIGVSYA). Positions 22-137 (MDMSIISYDE…DRYQARVGDA (116 aa)) are cleaved as a propeptide — activation peptide. The N-linked (GlcNAc...) asparagine glycan is linked to Asn-92. Intrachain disulfides connect Cys-159–Cys-201, Cys-193–Cys-234, Cys-292–Cys-343, Cys-376–Cys-388, and Cys-382–Cys-403. Cys-162 is an active-site residue. Catalysis depends on residues His-298 and Asn-318. Positions 354-463 (KKGQNPPNPG…FWAKSRKHIA (110 aa)) are cleaved as a propeptide — removed in mature form. Asn-415 carries an N-linked (GlcNAc...) asparagine glycan.

This sequence belongs to the peptidase C1 family. As to quaternary structure, interacts with PRN2. Interacts with WSCP.

Its function is as follows. Probable thiol protease. The protein is Probable cysteine protease RD21B of Arabidopsis thaliana (Mouse-ear cress).